The chain runs to 366 residues: Putative F-box protein At1g26515 (366 aa).

The segment at 1-20 is disordered; the sequence is MKTRSKKTKTENNQEKSKEK. The segment covering 8–20 has biased composition (basic and acidic residues); it reads TKTENNQEKSKEK. One can recognise an F-box domain in the interval 20 to 66; the sequence is KNKFDQLPLDLEIEIFRRLPLKSVARFLTLSKSCAATIRSPSFITSF.

The chain is Putative F-box protein At1g26515 from Arabidopsis thaliana (Mouse-ear cress).